The sequence spans 546 residues: Chaperonin GroEL (546 aa).

ATP contacts are provided by residues 29–32 (TMGP), Lys-50, 86–90 (DGTTT), Gly-414, and Asp-492.

Belongs to the chaperonin (HSP60) family. In terms of assembly, forms a cylinder of 14 subunits composed of two heptameric rings stacked back-to-back. Interacts with the co-chaperonin GroES.

The protein localises to the cytoplasm. The enzyme catalyses ATP + H2O + a folded polypeptide = ADP + phosphate + an unfolded polypeptide.. In terms of biological role, together with its co-chaperonin GroES, plays an essential role in assisting protein folding. The GroEL-GroES system forms a nano-cage that allows encapsulation of the non-native substrate proteins and provides a physical environment optimized to promote and accelerate protein folding. The sequence is that of Chaperonin GroEL from Helicobacter pylori (strain G27).